The following is a 216-amino-acid chain: Small ribosomal subunit protein uS3c (216 aa).

Residues 43-116 (IKNYVQKNMR…RLNIAITRVA (74 aa)) form the KH type-2 domain.

It belongs to the universal ribosomal protein uS3 family. Part of the 30S ribosomal subunit.

The protein localises to the plastid. Its subcellular location is the chloroplast. In Drimys granadensis, this protein is Small ribosomal subunit protein uS3c (rps3).